We begin with the raw amino-acid sequence, 398 residues long: RNA exonuclease 3 (398 aa).

Residues 239–385 (VLALDCEMGF…QDAIAAMDII (147 aa)) form the Exonuclease domain.

This sequence belongs to the REXO1/REXO3 family.

The protein resides in the cytoplasm. The protein localises to the nucleus. In terms of biological role, 3' to 5' exoribonuclease required for proper 3' end maturation of MRP RNA and of the U5L snRNA. The polypeptide is RNA exonuclease 3 (REX3) (Candida glabrata (strain ATCC 2001 / BCRC 20586 / JCM 3761 / NBRC 0622 / NRRL Y-65 / CBS 138) (Yeast)).